Reading from the N-terminus, the 157-residue chain is Transcription factor HES-2 (157 aa).

One can recognise a bHLH domain in the interval 13 to 70; it reads LRKNLKPLLEKRRRARINESLSQLKGLVLPLLGAETSRSSKLEKADILEMTVRFLQEQ. The Orange domain occupies 86-119; it reads YLEGYRACLARLARVLPACSVLEPAVSARLLEHL. The disordered stretch occupies residues 124–157; sequence VSDDSPSLTLPPAPAPAPSPPVPPPGSSGLWRPW. Positions 132–149 are enriched in pro residues; the sequence is TLPPAPAPAPSPPVPPPG. The short motif at 154-157 is the WRPW motif element; the sequence is WRPW.

In terms of assembly, transcription repression requires formation of a complex with a corepressor protein of the Groucho/TLE family.

The protein resides in the nucleus. Transcriptional repressor of genes that require a bHLH protein for their transcription. This is Transcription factor HES-2 (Hes2) from Mus musculus (Mouse).